The primary structure comprises 345 residues: L-threonine 3-dehydrogenase (345 aa).

C42 contacts Zn(2+). Active-site charge relay system residues include T44 and H47. The Zn(2+) site is built by H67, E68, C97, C100, C103, and C111. NAD(+)-binding positions include I179, D199, R204, 266 to 268 (LGI), and 290 to 291 (IY).

This sequence belongs to the zinc-containing alcohol dehydrogenase family. As to quaternary structure, homotetramer. Zn(2+) serves as cofactor.

The protein resides in the cytoplasm. The catalysed reaction is L-threonine + NAD(+) = (2S)-2-amino-3-oxobutanoate + NADH + H(+). It functions in the pathway amino-acid degradation; L-threonine degradation via oxydo-reductase pathway; glycine from L-threonine: step 1/2. In terms of biological role, catalyzes the NAD(+)-dependent oxidation of L-threonine to 2-amino-3-ketobutyrate. In Rhizobium etli (strain CIAT 652), this protein is L-threonine 3-dehydrogenase.